Reading from the N-terminus, the 993-residue chain is uncharacterized protein (993 aa).

The N-terminal stretch at 1–24 (MLLFKFNFTTAFLFTILAFAQARS) is a signal peptide. N-linked (GlcNAc...) asparagine glycans are attached at residues Asn-7, Asn-44, Asn-89, Asn-121, Asn-138, Asn-161, Asn-169, Asn-232, Asn-361, Asn-386, Asn-393, Asn-423, Asn-447, Asn-480, and Asn-488. Residue Glu-504 is part of the active site. 3 N-linked (GlcNAc...) asparagine glycosylation sites follow: Asn-545, Asn-548, and Asn-614. Asp-672 (proton donor) is an active-site residue. Residues Asn-673, Asn-814, Asn-826, Asn-835, Asn-846, Asn-910, Asn-940, and Asn-987 are each glycosylated (N-linked (GlcNAc...) asparagine).

This sequence belongs to the glycosyl hydrolase 31 family.

This is an uncharacterized protein from Schizosaccharomyces pombe (strain 972 / ATCC 24843) (Fission yeast).